The primary structure comprises 325 residues: Lipoyl synthase (325 aa).

The tract at residues 1 to 24 (MPIAPDRVRHPEKANRPDNPIQRK) is disordered. [4Fe-4S] cluster is bound by residues C54, C59, C65, C80, C84, C87, and S293. The region spanning 66–282 (WKKKHATFMI…VTVGRGKGFL (217 aa)) is the Radical SAM core domain.

The protein belongs to the radical SAM superfamily. Lipoyl synthase family. [4Fe-4S] cluster is required as a cofactor.

The protein localises to the cytoplasm. The enzyme catalyses [[Fe-S] cluster scaffold protein carrying a second [4Fe-4S](2+) cluster] + N(6)-octanoyl-L-lysyl-[protein] + 2 oxidized [2Fe-2S]-[ferredoxin] + 2 S-adenosyl-L-methionine + 4 H(+) = [[Fe-S] cluster scaffold protein] + N(6)-[(R)-dihydrolipoyl]-L-lysyl-[protein] + 4 Fe(3+) + 2 hydrogen sulfide + 2 5'-deoxyadenosine + 2 L-methionine + 2 reduced [2Fe-2S]-[ferredoxin]. Its pathway is protein modification; protein lipoylation via endogenous pathway; protein N(6)-(lipoyl)lysine from octanoyl-[acyl-carrier-protein]: step 2/2. Catalyzes the radical-mediated insertion of two sulfur atoms into the C-6 and C-8 positions of the octanoyl moiety bound to the lipoyl domains of lipoate-dependent enzymes, thereby converting the octanoylated domains into lipoylated derivatives. The sequence is that of Lipoyl synthase from Rhodospirillum centenum (strain ATCC 51521 / SW).